A 287-amino-acid chain; its full sequence is Urease accessory protein UreD (287 aa).

It belongs to the UreD family. As to quaternary structure, ureD, UreF and UreG form a complex that acts as a GTP-hydrolysis-dependent molecular chaperone, activating the urease apoprotein by helping to assemble the nickel containing metallocenter of UreC. The UreE protein probably delivers the nickel.

The protein localises to the cytoplasm. Required for maturation of urease via the functional incorporation of the urease nickel metallocenter. In Aliivibrio fischeri (strain ATCC 700601 / ES114) (Vibrio fischeri), this protein is Urease accessory protein UreD.